We begin with the raw amino-acid sequence, 222 residues long: Pyrrolidone-carboxylate peptidase (222 aa).

Catalysis depends on residues Glu80, Cys146, and His170.

Belongs to the peptidase C15 family. In terms of assembly, homotetramer.

It is found in the cytoplasm. The catalysed reaction is Release of an N-terminal pyroglutamyl group from a polypeptide, the second amino acid generally not being Pro.. Its function is as follows. Removes 5-oxoproline from various penultimate amino acid residues except L-proline. The protein is Pyrrolidone-carboxylate peptidase of Mycobacterium tuberculosis (strain ATCC 25177 / H37Ra).